The sequence spans 431 residues: Glutamate-1-semialdehyde 2,1-aminomutase 1 (431 aa).

Residue Lys-268 is modified to N6-(pyridoxal phosphate)lysine.

It belongs to the class-III pyridoxal-phosphate-dependent aminotransferase family. HemL subfamily. As to quaternary structure, homodimer. The cofactor is pyridoxal 5'-phosphate.

The protein localises to the cytoplasm. The enzyme catalyses (S)-4-amino-5-oxopentanoate = 5-aminolevulinate. It functions in the pathway porphyrin-containing compound metabolism; protoporphyrin-IX biosynthesis; 5-aminolevulinate from L-glutamyl-tRNA(Glu): step 2/2. The protein is Glutamate-1-semialdehyde 2,1-aminomutase 1 of Bacillus pumilus (strain SAFR-032).